Consider the following 179-residue polypeptide: Protein GrpE (179 aa).

Positions 1–23 (MSEEIKEQNVQDAQNENLAPDSV) are disordered.

The protein belongs to the GrpE family. In terms of assembly, homodimer.

Its subcellular location is the cytoplasm. Its function is as follows. Participates actively in the response to hyperosmotic and heat shock by preventing the aggregation of stress-denatured proteins, in association with DnaK and GrpE. It is the nucleotide exchange factor for DnaK and may function as a thermosensor. Unfolded proteins bind initially to DnaJ; upon interaction with the DnaJ-bound protein, DnaK hydrolyzes its bound ATP, resulting in the formation of a stable complex. GrpE releases ADP from DnaK; ATP binding to DnaK triggers the release of the substrate protein, thus completing the reaction cycle. Several rounds of ATP-dependent interactions between DnaJ, DnaK and GrpE are required for fully efficient folding. This Campylobacter curvus (strain 525.92) protein is Protein GrpE.